The primary structure comprises 301 residues: Recombination-associated protein RdgC (301 aa).

Belongs to the RdgC family.

Its subcellular location is the cytoplasm. It is found in the nucleoid. In terms of biological role, may be involved in recombination. In Stenotrophomonas maltophilia (strain R551-3), this protein is Recombination-associated protein RdgC.